We begin with the raw amino-acid sequence, 325 residues long: Interferon regulatory factor 1 (325 aa).

The segment at residues 5 to 113 (RMRMRPWLEM…SAVRVYRMLP (109 aa)) is a DNA-binding region (IRF tryptophan pentad repeat). Lys-78 is modified (N6-acetyllysine). The disordered stretch occupies residues 92–165 (EEVKDQSRNK…TLPDDHSSYT (74 aa)). Over residues 141 to 157 (GDSSPDTFSDGLSSSTL) the composition is skewed to polar residues. Glycyl lysine isopeptide (Lys-Gly) (interchain with G-Cter in SUMO) cross-links involve residues Lys-275 and Lys-299.

The protein belongs to the IRF family. In terms of assembly, monomer. Homodimer. Interacts with EP300. Interacts with MYD88. Interacts with PIAS3. Interacts with SPOP. Phosphorylated by CK2 and this positively regulates its activity. In terms of processing, sumoylation represses the transcriptional activity and displays enhanced resistance to protein degradation. Sumoylated by UBE2I/UBC9 and SUMO1. Inactivates the tumor suppressor activity. Elevated levels in tumor cells. Major site is Lys-275. Sumoylation is enhanced by PIAS3. Desumoylated by SENP1 in tumor cells and appears to compete with ubiquitination on C-terminal sites. Post-translationally, ubiquitinated in a SPOP-depedent manner. Appears to compete with sumoylation on C-terminal sites.

The protein localises to the nucleus. It localises to the cytoplasm. Its activity is regulated as follows. Activated by MYD88. Functionally, transcriptional regulator which displays a remarkable functional diversity in the regulation of cellular responses. Regulates transcription of IFN and IFN-inducible genes, host response to viral and bacterial infections, regulation of many genes expressed during hematopoiesis, inflammation, immune responses and cell proliferation and differentiation, regulation of the cell cycle and induction of growth arrest and programmed cell death following DNA damage. Stimulates both innate and acquired immune responses through the activation of specific target genes and can act as a transcriptional activator and repressor regulating target genes by binding to an interferon-stimulated response element (ISRE) in their promoters. Has an essentail role in IFNG-dependent immunity to mycobacteria. Competes with the transcriptional repressor ZBED2 for binding to a common consensus sequence in gene promoters. Its target genes for transcriptional activation activity include: genes involved in anti-viral response, such as IFN-alpha/beta, RIGI, TNFSF10/TRAIL, ZBP1, OAS1/2, PIAS1/GBP, EIF2AK2/PKR and RSAD2/viperin; antibacterial response, such as GBP2, GBP5 and NOS2/INOS; anti-proliferative response, such as p53/TP53, LOX and CDKN1A; apoptosis, such as BBC3/PUMA, CASP1, CASP7 and CASP8; immune response, such as IL7, IL12A/B and IL15, PTGS2/COX2 and CYBB; DNA damage responses and DNA repair, such as POLQ/POLH; MHC class I expression, such as TAP1, PSMB9/LMP2, PSME1/PA28A, PSME2/PA28B and B2M and MHC class II expression, such as CIITA; metabolic enzymes, such as ACOD1/IRG1. Represses genes involved in anti-proliferative response, such as BIRC5/survivin, CCNB1, CCNE1, CDK1, CDK2 and CDK4 and in immune response, such as FOXP3, IL4, ANXA2 and TLR4. Stimulates p53/TP53-dependent transcription through enhanced recruitment of EP300 leading to increased acetylation of p53/TP53. Plays an important role in immune response directly affecting NK maturation and activity, macrophage production of IL12, Th1 development and maturation of CD8+ T-cells. Also implicated in the differentiation and maturation of dendritic cells and in the suppression of regulatory T (Treg) cells development. Acts as a tumor suppressor and plays a role not only in antagonism of tumor cell growth but also in stimulating an immune response against tumor cells. This Homo sapiens (Human) protein is Interferon regulatory factor 1 (IRF1).